Consider the following 382-residue polypeptide: Galactokinase (382 aa).

34 to 37 (EHTD) provides a ligand contact to substrate. 124–130 (GAGLSSS) contacts ATP. Mg(2+)-binding residues include serine 130 and glutamate 162. The Proton acceptor role is filled by aspartate 174. Substrate is bound at residue tyrosine 223.

Belongs to the GHMP kinase family. GalK subfamily.

Its subcellular location is the cytoplasm. It catalyses the reaction alpha-D-galactose + ATP = alpha-D-galactose 1-phosphate + ADP + H(+). It functions in the pathway carbohydrate metabolism; galactose metabolism. In terms of biological role, catalyzes the transfer of the gamma-phosphate of ATP to D-galactose to form alpha-D-galactose-1-phosphate (Gal-1-P). The chain is Galactokinase from Salmonella schwarzengrund (strain CVM19633).